The chain runs to 966 residues: RNA polymerase-associated protein RapA (966 aa).

One can recognise a Helicase ATP-binding domain in the interval 163-337 (EVGRRIAPRV…FARLHLLDPN (175 aa)). 176–183 (DEVGLGKT) serves as a coordination point for ATP. Residues 283 to 286 (DEAH) carry the DEAH box motif. A Helicase C-terminal domain is found at 489-643 (RVDWLINLVK…TCPMGAILHE (155 aa)).

It belongs to the SNF2/RAD54 helicase family. RapA subfamily. In terms of assembly, interacts with the RNAP. Has a higher affinity for the core RNAP than for the holoenzyme. Its ATPase activity is stimulated by binding to RNAP.

Functionally, transcription regulator that activates transcription by stimulating RNA polymerase (RNAP) recycling in case of stress conditions such as supercoiled DNA or high salt concentrations. Probably acts by releasing the RNAP, when it is trapped or immobilized on tightly supercoiled DNA. Does not activate transcription on linear DNA. Probably not involved in DNA repair. The sequence is that of RNA polymerase-associated protein RapA from Histophilus somni (strain 129Pt) (Haemophilus somnus).